A 556-amino-acid chain; its full sequence is Glutamine--tRNA ligase (556 aa).

Positions 34–44 (PEPNGYLHIGH) match the 'HIGH' region motif. Residues 35–37 (EPN) and 41–47 (HIGHAKS) each bind ATP. L-glutamine contacts are provided by D67 and Y212. Residues T231, 263–264 (RL), and 271–273 (MSK) each bind ATP. Positions 270–274 (VMSKR) match the 'KMSKS' region motif.

Belongs to the class-I aminoacyl-tRNA synthetase family. As to quaternary structure, monomer.

It localises to the cytoplasm. The enzyme catalyses tRNA(Gln) + L-glutamine + ATP = L-glutaminyl-tRNA(Gln) + AMP + diphosphate. In Nitrosomonas europaea (strain ATCC 19718 / CIP 103999 / KCTC 2705 / NBRC 14298), this protein is Glutamine--tRNA ligase.